Consider the following 883-residue polypeptide: Bifunctional heparan sulfate N-deacetylase/N-sulfotransferase 2 (883 aa).

The Cytoplasmic portion of the chain corresponds to 1-18 (MLQLWKVVRPARQLELHR). Residues 19–39 (LILLLIAFSLGSMGFLAYYVS) traverse the membrane as a helical; Signal-anchor for type II membrane protein segment. Topologically, residues 40–883 (TSPKAKEPLP…REELQHSSLG (844 aa)) are lumenal. The segment at 41–597 (SPKAKEPLPL…KRHKDIWSKE (557 aa)) is heparan sulfate N-deacetylase 2. The disordered stretch occupies residues 49–81 (PLPLGDCSSGGAAGPGPARPPVPPRPPRPPETA). Positions 65 to 78 (PARPPVPPRPPRPP) are enriched in pro residues. Residues Asn233, Asn350, and Asn400 are each glycosylated (N-linked (GlcNAc...) asparagine). The heparan sulfate N-sulfotransferase 2 stretch occupies residues 598–883 (KTCDRLPKFL…REELQHSSLG (286 aa)). The For sulfotransferase activity role is filled by Lys613. 613–617 (KTGTT) provides a ligand contact to 3'-phosphoadenylyl sulfate. Residue Asn666 is glycosylated (N-linked (GlcNAc...) asparagine). Ser711 provides a ligand contact to 3'-phosphoadenylyl sulfate. N-linked (GlcNAc...) asparagine glycans are attached at residues Asn726 and Asn802. Cys817 and Cys827 are joined by a disulfide. Residue 832 to 836 (KGRRY) coordinates 3'-phosphoadenylyl sulfate.

It belongs to the sulfotransferase 1 family. NDST subfamily. In terms of assembly, monomer.

The protein localises to the golgi apparatus membrane. The catalysed reaction is alpha-D-glucosaminyl-[heparan sulfate](n) + 3'-phosphoadenylyl sulfate = N-sulfo-alpha-D-glucosaminyl-[heparan sulfate](n) + adenosine 3',5'-bisphosphate + 2 H(+). The protein operates within glycan metabolism; heparan sulfate biosynthesis. It participates in glycan metabolism; heparin biosynthesis. Its function is as follows. Essential bifunctional enzyme that catalyzes both the N-deacetylation and the N-sulfation of glucosamine (GlcNAc) of the glycosaminoglycan in heparan sulfate. Modifies the GlcNAc-GlcA disaccharide repeating sugar backbone to make N-sulfated heparosan, a prerequisite substrate for later modifications in heparin biosynthesis. Plays a role in determining the extent and pattern of sulfation of heparan sulfate. Required for the exosomal release of SDCBP, CD63 and syndecan. The polypeptide is Bifunctional heparan sulfate N-deacetylase/N-sulfotransferase 2 (NDST2) (Homo sapiens (Human)).